Reading from the N-terminus, the 334-residue chain is Glutaminase (334 aa).

Substrate is bound by residues S76, N126, E170, N177, Y201, Y253, and V271.

This sequence belongs to the glutaminase family. Homotetramer.

It catalyses the reaction L-glutamine + H2O = L-glutamate + NH4(+). This chain is Glutaminase, found in Trichormus variabilis (strain ATCC 29413 / PCC 7937) (Anabaena variabilis).